A 223-amino-acid chain; its full sequence is Type II restriction enzyme BglII (223 aa).

Aspartate 84 and valine 94 together coordinate Mg(2+).

As to quaternary structure, homodimer. Requires Mg(2+) as cofactor.

It carries out the reaction Endonucleolytic cleavage of DNA to give specific double-stranded fragments with terminal 5'-phosphates.. Functionally, a P subtype restriction enzyme that recognizes the double-stranded sequence 5'-AGATCT-3' and cleaves after A-1. This chain is Type II restriction enzyme BglII (bglIIR), found in Bacillus subtilis.